Reading from the N-terminus, the 375-residue chain is Queuine tRNA-ribosyltransferase (375 aa).

D94 acts as the Proton acceptor in catalysis. Residues 94-98 (DSGGF), D148, Q191, and G218 contribute to the substrate site. The RNA binding stretch occupies residues 249 to 255 (GVGSPDD). D268 functions as the Nucleophile in the catalytic mechanism. Residues 273–277 (TRIAR) form an RNA binding; important for wobble base 34 recognition region. The Zn(2+) site is built by C306, C308, C311, and H337.

Belongs to the queuine tRNA-ribosyltransferase family. In terms of assembly, homodimer. Within each dimer, one monomer is responsible for RNA recognition and catalysis, while the other monomer binds to the replacement base PreQ1. Zn(2+) is required as a cofactor.

The catalysed reaction is 7-aminomethyl-7-carbaguanine + guanosine(34) in tRNA = 7-aminomethyl-7-carbaguanosine(34) in tRNA + guanine. It functions in the pathway tRNA modification; tRNA-queuosine biosynthesis. Catalyzes the base-exchange of a guanine (G) residue with the queuine precursor 7-aminomethyl-7-deazaguanine (PreQ1) at position 34 (anticodon wobble position) in tRNAs with GU(N) anticodons (tRNA-Asp, -Asn, -His and -Tyr). Catalysis occurs through a double-displacement mechanism. The nucleophile active site attacks the C1' of nucleotide 34 to detach the guanine base from the RNA, forming a covalent enzyme-RNA intermediate. The proton acceptor active site deprotonates the incoming PreQ1, allowing a nucleophilic attack on the C1' of the ribose to form the product. After dissociation, two additional enzymatic reactions on the tRNA convert PreQ1 to queuine (Q), resulting in the hypermodified nucleoside queuosine (7-(((4,5-cis-dihydroxy-2-cyclopenten-1-yl)amino)methyl)-7-deazaguanosine). The sequence is that of Queuine tRNA-ribosyltransferase from Thermoanaerobacter sp. (strain X514).